The sequence spans 316 residues: Pantothenate kinase (316 aa).

Position 95 to 102 (Gly95 to Ser102) interacts with ATP.

Belongs to the prokaryotic pantothenate kinase family.

Its subcellular location is the cytoplasm. The catalysed reaction is (R)-pantothenate + ATP = (R)-4'-phosphopantothenate + ADP + H(+). Its pathway is cofactor biosynthesis; coenzyme A biosynthesis; CoA from (R)-pantothenate: step 1/5. The protein is Pantothenate kinase of Shewanella sp. (strain MR-7).